The primary structure comprises 515 residues: DNA-directed RNA polymerase subunit Rpo2N (515 aa).

It belongs to the RNA polymerase beta chain family. In terms of assembly, part of the RNA polymerase complex.

It localises to the cytoplasm. The enzyme catalyses RNA(n) + a ribonucleoside 5'-triphosphate = RNA(n+1) + diphosphate. Its function is as follows. DNA-dependent RNA polymerase (RNAP) catalyzes the transcription of DNA into RNA using the four ribonucleoside triphosphates as substrates. The Rpo2 subunit (Rpo2N and Rpo2C in this organism) is implicated in DNA promoter recognition and in nucleotide binding. This Methanothermobacter thermautotrophicus (strain Winter) (Methanobacterium thermoautotrophicum) protein is DNA-directed RNA polymerase subunit Rpo2N.